The sequence spans 125 residues: Fumarate reductase subunit D (125 aa).

3 consecutive transmembrane segments (helical) span residues 30-50 (FAML…LGVI), 62-82 (AFAT…LPMW), and 105-125 (VACY…IFMI).

Belongs to the FrdD family. Part of an enzyme complex containing four subunits: a flavoprotein (FrdA), an iron-sulfur protein (FrdB), and two hydrophobic anchor proteins (FrdC and FrdD).

The protein resides in the cell inner membrane. In terms of biological role, anchors the catalytic components of the fumarate reductase complex to the cell membrane, binds quinones. This is Fumarate reductase subunit D from Vibrio parahaemolyticus serotype O3:K6 (strain RIMD 2210633).